Here is a 90-residue protein sequence, read N- to C-terminus: Putative protein p49 (90 aa).

This is Putative protein p49 (49) from Escherichia coli (Bacteriophage APSE-1).